The sequence spans 361 residues: Phospho-N-acetylmuramoyl-pentapeptide-transferase (361 aa).

Helical transmembrane passes span 28-48 (LAII…IKFL), 74-94 (TMGG…LADL), 99-119 (IWIT…DDYA), 133-153 (SKLL…EYLD), 168-188 (LSLD…VGSS), 203-223 (VPIA…GNLI), 236-256 (TGEL…FLWF), 263-283 (VFMG…ISVI), 288-308 (IVLA…ILQV), and 338-358 (KVVI…LSSL).

It belongs to the glycosyltransferase 4 family. MraY subfamily. Mg(2+) is required as a cofactor.

Its subcellular location is the cell inner membrane. The enzyme catalyses UDP-N-acetyl-alpha-D-muramoyl-L-alanyl-gamma-D-glutamyl-meso-2,6-diaminopimeloyl-D-alanyl-D-alanine + di-trans,octa-cis-undecaprenyl phosphate = di-trans,octa-cis-undecaprenyl diphospho-N-acetyl-alpha-D-muramoyl-L-alanyl-D-glutamyl-meso-2,6-diaminopimeloyl-D-alanyl-D-alanine + UMP. It functions in the pathway cell wall biogenesis; peptidoglycan biosynthesis. Functionally, catalyzes the initial step of the lipid cycle reactions in the biosynthesis of the cell wall peptidoglycan: transfers peptidoglycan precursor phospho-MurNAc-pentapeptide from UDP-MurNAc-pentapeptide onto the lipid carrier undecaprenyl phosphate, yielding undecaprenyl-pyrophosphoryl-MurNAc-pentapeptide, known as lipid I. This Rickettsia felis (strain ATCC VR-1525 / URRWXCal2) (Rickettsia azadi) protein is Phospho-N-acetylmuramoyl-pentapeptide-transferase.